Consider the following 736-residue polypeptide: Phosphoribosylformylglycinamidine synthase subunit PurL (736 aa).

Residue His-49 is part of the active site. ATP is bound by residues Tyr-52 and Lys-91. Glu-93 lines the Mg(2+) pocket. Residues 94 to 97 and Arg-116 each bind substrate; that span reads SHNH. His-95 acts as the Proton acceptor in catalysis. Position 117 (Asp-117) interacts with Mg(2+). Gln-240 lines the substrate pocket. A Mg(2+)-binding site is contributed by Asp-268. 312 to 314 contributes to the substrate binding site; the sequence is ESQ. ATP contacts are provided by Asp-493 and Gly-530. Asn-531 contacts Mg(2+). Ser-533 provides a ligand contact to substrate.

It belongs to the FGAMS family. Monomer. Part of the FGAM synthase complex composed of 1 PurL, 1 PurQ and 2 PurS subunits.

The protein resides in the cytoplasm. It catalyses the reaction N(2)-formyl-N(1)-(5-phospho-beta-D-ribosyl)glycinamide + L-glutamine + ATP + H2O = 2-formamido-N(1)-(5-O-phospho-beta-D-ribosyl)acetamidine + L-glutamate + ADP + phosphate + H(+). Its pathway is purine metabolism; IMP biosynthesis via de novo pathway; 5-amino-1-(5-phospho-D-ribosyl)imidazole from N(2)-formyl-N(1)-(5-phospho-D-ribosyl)glycinamide: step 1/2. In terms of biological role, part of the phosphoribosylformylglycinamidine synthase complex involved in the purines biosynthetic pathway. Catalyzes the ATP-dependent conversion of formylglycinamide ribonucleotide (FGAR) and glutamine to yield formylglycinamidine ribonucleotide (FGAM) and glutamate. The FGAM synthase complex is composed of three subunits. PurQ produces an ammonia molecule by converting glutamine to glutamate. PurL transfers the ammonia molecule to FGAR to form FGAM in an ATP-dependent manner. PurS interacts with PurQ and PurL and is thought to assist in the transfer of the ammonia molecule from PurQ to PurL. This chain is Phosphoribosylformylglycinamidine synthase subunit PurL, found in Rhodopseudomonas palustris (strain BisB5).